Reading from the N-terminus, the 505-residue chain is MTEQTPAPQPPADENSLIAERRAKLGALRGQGIAYPNDFVREHFAGDLQAEFADADTWTPEALEASGRTVRMAGRLMAKRVMGKASFAQIQDESGRVQLFLQGNVLGDAYTAFKGWDVGDIVAVEGGLTRTKTGELSVKASALRLLTKSLRPLPDKWHGLSDVEQRYRQRYVDLIVTPEAREVFIKRSKIIRAMRAWLDARRFLEVETPMMHYIPGGATAKPFTTHHNALDLDLYLRVAPELYLKRLVVGGLERVYEINRNFRNEGVSTRHNPEFTMLELYEAYATYHQIMDLTEQVIRDTAQSVLGTTQVSWDGADIDLAPAFRRWRMDEAVRHHNPEISAADCTDREALLRHCERLKIRVKPSYGWGKLLLEIFEATVEHTLVQPTFITDHPVEVSPLARSSDTEPGYTDRFELFINGKELANGFSELNDPEDQAARFQAQVQAKDGGDDEAMHFDADYIRALEYGMAPTGGLGIGIDRLVMLLTGSTSIRDVLLFPYMRPEA.

Residues E415 and E422 each coordinate Mg(2+).

The protein belongs to the class-II aminoacyl-tRNA synthetase family. Homodimer. Mg(2+) serves as cofactor.

The protein resides in the cytoplasm. The catalysed reaction is tRNA(Lys) + L-lysine + ATP = L-lysyl-tRNA(Lys) + AMP + diphosphate. The sequence is that of Lysine--tRNA ligase from Xanthomonas axonopodis pv. citri (strain 306).